We begin with the raw amino-acid sequence, 227 residues long: Pyridoxal 5'-phosphate synthase subunit PdxT (227 aa).

52–54 contacts L-glutamine; sequence GES. C84 acts as the Nucleophile in catalysis. L-glutamine is bound by residues R118 and 149-150; that span reads IR. Active-site charge relay system residues include H189 and E191.

It belongs to the glutaminase PdxT/SNO family. In terms of assembly, in the presence of PdxS, forms a dodecamer of heterodimers. Only shows activity in the heterodimer.

It carries out the reaction aldehydo-D-ribose 5-phosphate + D-glyceraldehyde 3-phosphate + L-glutamine = pyridoxal 5'-phosphate + L-glutamate + phosphate + 3 H2O + H(+). The catalysed reaction is L-glutamine + H2O = L-glutamate + NH4(+). Its pathway is cofactor biosynthesis; pyridoxal 5'-phosphate biosynthesis. In terms of biological role, catalyzes the hydrolysis of glutamine to glutamate and ammonia as part of the biosynthesis of pyridoxal 5'-phosphate. The resulting ammonia molecule is channeled to the active site of PdxS. The protein is Pyridoxal 5'-phosphate synthase subunit PdxT of Renibacterium salmoninarum (strain ATCC 33209 / DSM 20767 / JCM 11484 / NBRC 15589 / NCIMB 2235).